A 258-amino-acid polypeptide reads, in one-letter code: MSKVKLTKESIVALLTQGKDLEFEEDQNLVAFNFKTFCLENLDQIKKMSVISCLTFLKNRQSIMKVIKQSDFTFGKITIKKTSDRIGATDMTFRRLDSLIRVRLVEETGNSENLNTIKSKIASHPLIQAYGLPLDDAKSVRLAIMLGGSLPLIASVDSFEMISVVLAIYQDAKYKDLGIDPKKYDTKEALGKVCTVLKSKAFEMNEDQVKKGKEYAAILSSSNPNAKGSIAMEHYSETLNKFYEMFGVKKQAKLTELA.

The protein belongs to the tospovirus nucleocapsid protein family. As to quaternary structure, homotrimer. Binds the viral genomic RNA.

The protein resides in the virion. Its function is as follows. Encapsidates the genome protecting it from nucleases. The encapsidated genomic RNA is termed the nucleocapsid (NC) and serves as template for transcription and replication. The NC have a helical organization. The sequence is that of Nucleoprotein (N) from Tomato spotted wilt virus (strain Bulgarian L3) (TSWV).